A 30-amino-acid polypeptide reads, in one-letter code: Antifungal protein Lap (30 aa).

Functionally, displays antifungal activity against M.arachidicola and P.piricola, but not against R.solani, C.gossypii and C.comatus. Inhibits mycelial growth in P.piricola with an IC(50) of 70 nM. Displays very low cell-free translation inhibitory activity in a rabbit reticulocyte lysate system (IC(50)=70 uM) but is able to inhibit HIV-1 reverse transcriptase activity (IC(50)=5.2 nM). This chain is Antifungal protein Lap, found in Lyophyllum shimeji (Hon-shimeji).